A 681-amino-acid chain; its full sequence is Potassium-transporting ATPase ATP-binding subunit (681 aa).

The next 4 membrane-spanning stretches (helical) occupy residues 37-57 (MFVV…PTYF), 64-84 (VGYN…ANFA), 218-238 (IALT…VMTL), and 255-275 (IALL…AIGI). Aspartate 306 serves as the catalytic 4-aspartylphosphate intermediate. Residues aspartate 343, glutamate 347, 375–382 (FSAETRMS), and lysine 394 contribute to the ATP site. Positions 517 and 521 each coordinate Mg(2+). 3 helical membrane-spanning segments follow: residues 573–595 (ALTT…AIIS), 615–635 (AILS…PIAM), and 655–675 (IYGL…DMII).

It belongs to the cation transport ATPase (P-type) (TC 3.A.3) family. Type IA subfamily. In terms of assembly, the system is composed of three essential subunits: KdpA, KdpB and KdpC.

It localises to the cell membrane. The enzyme catalyses K(+)(out) + ATP + H2O = K(+)(in) + ADP + phosphate + H(+). Part of the high-affinity ATP-driven potassium transport (or Kdp) system, which catalyzes the hydrolysis of ATP coupled with the electrogenic transport of potassium into the cytoplasm. This subunit is responsible for energy coupling to the transport system and for the release of the potassium ions to the cytoplasm. This chain is Potassium-transporting ATPase ATP-binding subunit, found in Caldanaerobacter subterraneus subsp. tengcongensis (strain DSM 15242 / JCM 11007 / NBRC 100824 / MB4) (Thermoanaerobacter tengcongensis).